A 464-amino-acid chain; its full sequence is Glycine receptor subunit alpha-3 (464 aa).

The first 33 residues, 1–33, serve as a signal peptide directing secretion; the sequence is MAHVRHFRTLVSGFYFWEAALLLSLVATKETNS. Topologically, residues 34-255 are extracellular; it reads ARSRSAPMSP…RFHLERQMGY (222 aa). Asn71 carries N-linked (GlcNAc...) asparagine glycosylation. Cys171 and Cys185 are disulfide-bonded. Zn(2+)-binding residues include Glu225 and Asp227. A disulfide bond links Cys231 and Cys242. Strychnine is bound at residue 235-240; it reads YNTGKF. A Zn(2+)-binding site is contributed by His248. A helical transmembrane segment spans residues 256–277; the sequence is YLIQMYIPSLLIVILSWVSFWI. At 278-282 the chain is on the cytoplasmic side; that stretch reads NMDAA. Residues 283 to 303 form a helical membrane-spanning segment; it reads PARVALGITTVLTMTTQSSGS. Over 304–314 the chain is Extracellular; sequence RASLPKVSYVK. A helical membrane pass occupies residues 315-335; sequence AIDIWMAVCLLFVFSALLEYA. Residues 336–430 are Cytoplasmic-facing; that stretch reads AVNFVSRQHK…FIDRAKKIDT (95 aa). A Phosphoserine modification is found at Ser370. Position 379 is a phosphoserine; by PKA (Ser379). A helical transmembrane segment spans residues 431–451; the sequence is ISRACFPLAFLIFNIFYWVIY. The Extracellular segment spans residues 452 to 464; the sequence is KILRHEDIHQQQD.

This sequence belongs to the ligand-gated ion channel (TC 1.A.9) family. Glycine receptor (TC 1.A.9.3) subfamily. GLRA3 sub-subfamily. As to quaternary structure, homopentamer (in vitro). Heteropentamer composed of GLRA3 and GLRB. Both homopentamers and heteropentamers form functional ion channels, but their characteristics are subtly different. In terms of processing, phosphorylated by PKA; this causes down-regulation of channel activity. Dephosphorylated in response to activation of HTR1A signaling; this increases channel activity. In terms of tissue distribution, detected in brainstem, also in neurons that control rhythmic breathing. Detected in superficial laminae of the dorsal horn of the thoracic spinal cord. Detected in dentate gyrus in hippocampus, especially in stratum granulare. Detected in the inner plexiform layer in the retina (at protein level). Detected in midbrain, thalamus, brain cortex, hippocampus, and at lower levels in cerebellum.

It is found in the postsynaptic cell membrane. Its subcellular location is the synapse. It localises to the perikaryon. The protein resides in the cell projection. The protein localises to the dendrite. It is found in the cell membrane. It catalyses the reaction chloride(in) = chloride(out). Its activity is regulated as follows. Inhibited by prostaglandin E2, probably via PKA-mediated phosphorylation at Ser-379. Its function is as follows. Glycine receptors are ligand-gated chloride channels. Channel opening is triggered by extracellular glycine. Channel characteristics depend on the subunit composition; heteropentameric channels display faster channel closure. Plays an important role in the down-regulation of neuronal excitability. Contributes to the generation of inhibitory postsynaptic currents. Contributes to increased pain perception in response to increased prostaglandin E2 levels. Plays a role in the regulation of breathing rhythm, especially of the duration of the postinspiratory phase. Plays a role in cellular responses to ethanol. The protein is Glycine receptor subunit alpha-3 (Glra3) of Mus musculus (Mouse).